Consider the following 156-residue polypeptide: Small ribosomal subunit protein uS7 (156 aa).

It belongs to the universal ribosomal protein uS7 family. In terms of assembly, part of the 30S ribosomal subunit. Contacts proteins S9 and S11.

Functionally, one of the primary rRNA binding proteins, it binds directly to 16S rRNA where it nucleates assembly of the head domain of the 30S subunit. Is located at the subunit interface close to the decoding center, probably blocks exit of the E-site tRNA. The sequence is that of Small ribosomal subunit protein uS7 from Prochlorococcus marinus (strain MIT 9301).